The primary structure comprises 253 residues: Ribosome maturation factor RimP (253 aa).

Residues 186 to 199 (RRGKAAEREKKRDL) are compositionally biased toward basic and acidic residues. The disordered stretch occupies residues 186 to 253 (RRGKAAEREK…RARRGEIDPD (68 aa)). Residues 201-216 (LAPPLAPHAKPAAQAK) show a composition bias toward low complexity. The span at 240 to 253 (LAADRARRGEIDPD) shows a compositional bias: basic and acidic residues.

This sequence belongs to the RimP family.

The protein localises to the cytoplasm. Functionally, required for maturation of 30S ribosomal subunits. The protein is Ribosome maturation factor RimP of Bradyrhizobium sp. (strain BTAi1 / ATCC BAA-1182).